A 249-amino-acid chain; its full sequence is 5'-nucleotidase SurE (249 aa).

Positions 8, 9, 39, and 91 each coordinate a divalent metal cation.

Belongs to the SurE nucleotidase family. A divalent metal cation serves as cofactor.

It localises to the cytoplasm. It carries out the reaction a ribonucleoside 5'-phosphate + H2O = a ribonucleoside + phosphate. In terms of biological role, nucleotidase that shows phosphatase activity on nucleoside 5'-monophosphates. In Pseudomonas fluorescens (strain SBW25), this protein is 5'-nucleotidase SurE.